The following is a 678-amino-acid chain: Macrolide export ATP-binding/permease protein MacB 1 (678 aa).

The ABC transporter domain maps to 11–249 (LRLENVSREF…PKMVDIPSVI (239 aa)). 47–54 (GTSGSGKS) contributes to the ATP binding site. Transmembrane regions (helical) follow at residues 303–323 (ALTM…VALG), 558–578 (IAVI…LVSV), 608–628 (LVCL…GLLF), and 641–661 (AASI…FGFF).

Belongs to the ABC transporter superfamily. Macrolide exporter (TC 3.A.1.122) family. Homodimer. Part of the tripartite efflux system MacAB-TolC, which is composed of an inner membrane transporter, MacB, a periplasmic membrane fusion protein, MacA, and an outer membrane component, TolC. The complex forms a large protein conduit and can translocate molecules across both the inner and outer membranes. Interacts with MacA.

It is found in the cell inner membrane. Its function is as follows. Part of the tripartite efflux system MacAB-TolC. MacB is a non-canonical ABC transporter that contains transmembrane domains (TMD), which form a pore in the inner membrane, and an ATP-binding domain (NBD), which is responsible for energy generation. Confers resistance against macrolides. This chain is Macrolide export ATP-binding/permease protein MacB 1, found in Yersinia pestis bv. Antiqua (strain Nepal516).